Reading from the N-terminus, the 459-residue chain is Phosphoglucosamine mutase (459 aa).

Ser-112 (phosphoserine intermediate) is an active-site residue. Residues Ser-112, Asp-249, Asp-251, and Asp-253 each contribute to the Mg(2+) site. The residue at position 112 (Ser-112) is a Phosphoserine.

The protein belongs to the phosphohexose mutase family. Requires Mg(2+) as cofactor. Activated by phosphorylation.

It catalyses the reaction alpha-D-glucosamine 1-phosphate = D-glucosamine 6-phosphate. Its function is as follows. Catalyzes the conversion of glucosamine-6-phosphate to glucosamine-1-phosphate. This is Phosphoglucosamine mutase from Synechococcus sp. (strain RCC307).